The chain runs to 126 residues: CD59 glycoprotein (126 aa).

The N-terminal stretch at Met1–Ser25 is a signal peptide. The region spanning Leu26–Ser106 is the UPAR/Ly6 domain. Intrachain disulfides connect Cys28–Cys51, Cys31–Cys38, Cys44–Cys64, Cys70–Cys88, and Cys89–Cys94. N-linked (GlcNAc...) asparagine glycosylation is present at Asn43. Asn100 carries GPI-anchor amidated asparagine lipidation. Residues Gly101–Pro126 constitute a propeptide, removed in mature form.

In terms of assembly, interacts with T-cell surface antigen CD2. Post-translationally, N- and O-glycosylated.

Its subcellular location is the cell membrane. It is found in the secreted. In terms of biological role, potent inhibitor of the complement membrane attack complex (MAC) action, which protects self-cells from damage during complement activation. Acts by binding to the beta-haipins of C8 (C8A and C8B) components of the assembling MAC, forming an intermolecular beta-sheet that prevents incorporation of the multiple copies of C9 required for complete formation of the osmolytic pore. In Papio sp. (Baboon), this protein is CD59 glycoprotein.